Reading from the N-terminus, the 556-residue chain is Dihydroxy-acid dehydratase (556 aa).

Aspartate 78 contributes to the Mg(2+) binding site. Cysteine 119 contributes to the [2Fe-2S] cluster binding site. Mg(2+) contacts are provided by aspartate 120 and lysine 121. The residue at position 121 (lysine 121) is an N6-carboxylysine. Cysteine 191 serves as a coordination point for [2Fe-2S] cluster. Glutamate 442 is a binding site for Mg(2+). Serine 468 acts as the Proton acceptor in catalysis.

It belongs to the IlvD/Edd family. Homodimer. Requires [2Fe-2S] cluster as cofactor. Mg(2+) serves as cofactor.

It carries out the reaction (2R)-2,3-dihydroxy-3-methylbutanoate = 3-methyl-2-oxobutanoate + H2O. The enzyme catalyses (2R,3R)-2,3-dihydroxy-3-methylpentanoate = (S)-3-methyl-2-oxopentanoate + H2O. It functions in the pathway amino-acid biosynthesis; L-isoleucine biosynthesis; L-isoleucine from 2-oxobutanoate: step 3/4. It participates in amino-acid biosynthesis; L-valine biosynthesis; L-valine from pyruvate: step 3/4. Functionally, functions in the biosynthesis of branched-chain amino acids. Catalyzes the dehydration of (2R,3R)-2,3-dihydroxy-3-methylpentanoate (2,3-dihydroxy-3-methylvalerate) into 2-oxo-3-methylpentanoate (2-oxo-3-methylvalerate) and of (2R)-2,3-dihydroxy-3-methylbutanoate (2,3-dihydroxyisovalerate) into 2-oxo-3-methylbutanoate (2-oxoisovalerate), the penultimate precursor to L-isoleucine and L-valine, respectively. This chain is Dihydroxy-acid dehydratase, found in Clostridium kluyveri (strain NBRC 12016).